The chain runs to 423 residues: Phosphoribosylamine--glycine ligase (423 aa).

The region spanning 107 to 312 is the ATP-grasp domain; it reads KAFADRYGLP…LVPYLVACAN (206 aa). An ATP-binding site is contributed by 133 to 193; that stretch reads LELFEPPYVI…EEFLEGEIGS (61 aa). Mg(2+) is bound by residues Glu-270, Glu-282, and Asn-284. Glu-270, Glu-282, and Asn-284 together coordinate Mn(2+).

The protein belongs to the GARS family. The cofactor is Mg(2+). Mn(2+) is required as a cofactor.

The catalysed reaction is 5-phospho-beta-D-ribosylamine + glycine + ATP = N(1)-(5-phospho-beta-D-ribosyl)glycinamide + ADP + phosphate + H(+). It participates in purine metabolism; IMP biosynthesis via de novo pathway; N(1)-(5-phospho-D-ribosyl)glycinamide from 5-phospho-alpha-D-ribose 1-diphosphate: step 2/2. This is Phosphoribosylamine--glycine ligase from Phenylobacterium zucineum (strain HLK1).